A 373-amino-acid chain; its full sequence is Chemerin-like receptor 1 (373 aa).

Residues 1–41 (MRMEDEDYNTSISYGDEYPDYLDSIVVLEDLSPLEARVTRI) are Extracellular-facing. N-linked (GlcNAc...) asparagine glycosylation is present at asparagine 9. The helical transmembrane segment at 42-64 (FLVVVYSIVCFLGILGNGLVIII) threads the bilayer. The Cytoplasmic portion of the chain corresponds to 65–75 (ATFKMKKTVNM). A helical membrane pass occupies residues 76–97 (VWFLNLAVADFLFNVFLPIHIT). At 98 to 114 (YAAMDYHWVFGTAMCKI) the chain is on the extracellular side. An intrachain disulfide couples cysteine 112 to cysteine 189. Residues 115-135 (SNFLLIHNMFTSVFLLTIISS) form a helical membrane-spanning segment. Topologically, residues 136-154 (DRCISVLLPVWSQNHRSVR) are cytoplasmic. Residues 155-176 (LAYMACMVIWVLAFFLSSPSLV) traverse the membrane as a helical segment. The Extracellular portion of the chain corresponds to 177–224 (FRDTANLHGKISCFNNFSLSTPGSSSWPTHSQMDPVGYSRHMVVTVTR). Asparagine 192 carries an N-linked (GlcNAc...) asparagine glycan. Residues 225 to 245 (FLCGFLVPVLIITACYLTIVC) form a helical membrane-spanning segment. Over 246–261 (KLQRNRLAKTKKPFKI) the chain is Cytoplasmic. The helical transmembrane segment at 262–282 (IVTIIITFFLCWCPYHTLNLL) threads the bilayer. Topologically, residues 283–300 (ELHHTAMPGSVFSLGLPL) are extracellular. The chain crosses the membrane as a helical span at residues 301-320 (ATALAIANSCMNPILYVFMG). Topologically, residues 321 to 373 (QDFKKFKVALFSRLVNALSEDTGHSSYPSHRSFTKMSSMNERTSMNERETGML) are cytoplasmic. Serine 339 bears the Phosphoserine mark. The disordered stretch occupies residues 341-373 (DTGHSSYPSHRSFTKMSSMNERTSMNERETGML). Threonine 342 is subject to Phosphothreonine. The segment covering 344-363 (HSSYPSHRSFTKMSSMNERT) has biased composition (polar residues). Phosphoserine is present on residues serine 349, serine 352, and serine 358. Residues 364–373 (SMNERETGML) show a composition bias toward basic and acidic residues.

It belongs to the chemokine-like receptor (CMKLR) family. As to expression, prominently expressed in developing osseous and cartilaginous tissue. Also found in adult parathyroid glands. Expressed in cardiovascular system, brain, kidney, gastrointestinal tissues and myeloid tissues. Expressed in a broad array of tissues associated with hematopoietic and immune function including, spleen, thymus, appendix, lymph node, bone marrow and fetal liver. Among leukocyte populations abundant expression in monocyte-derived macrophage and immature dendritic cells (DCs). High expression in blood monocytes and low levels in polymorphonuclear cells and T-cells. Expressed on endothelial cells. Highly expressed in differentiating adipocytes.

The protein resides in the cell membrane. Receptor for the chemoattractant adipokine chemerin/RARRES2 and for the omega-3 fatty acid derived molecule resolvin E1. Interaction with RARRES2 initiates activation of G proteins G(i)/G(o) and beta-arrestin pathways inducing cellular responses via second messenger pathways such as intracellular calcium mobilization, phosphorylation of MAP kinases MAPK1/MAPK3 (ERK1/2), TYRO3, MAPK14/P38MAPK and PI3K leading to multifunctional effects, like reduction of immune responses, enhancing of adipogenesis and angionesis. Resolvin E1 down-regulates cytokine production in macrophages by reducing the activation of MAPK1/3 (ERK1/2) and NF-kappa-B. Positively regulates adipogenesis and adipocyte metabolism. In terms of biological role, (Microbial infection) Acts as a coreceptor for several SIV strains (SIVMAC316, SIVMAC239, SIVMACL7E-FR and SIVSM62A), as well as a primary HIV-1 strain (92UG024-2). The sequence is that of Chemerin-like receptor 1 from Homo sapiens (Human).